The following is a 294-amino-acid chain: Elongation factor Ts (294 aa).

Residues 81–84 (TDFV) form an involved in Mg(2+) ion dislocation from EF-Tu region.

Belongs to the EF-Ts family.

It is found in the cytoplasm. In terms of biological role, associates with the EF-Tu.GDP complex and induces the exchange of GDP to GTP. It remains bound to the aminoacyl-tRNA.EF-Tu.GTP complex up to the GTP hydrolysis stage on the ribosome. The polypeptide is Elongation factor Ts (Lawsonia intracellularis (strain PHE/MN1-00)).